We begin with the raw amino-acid sequence, 435 residues long: Hexane cyclase xenF (435 aa).

A signal peptide spans 1–23 (MSPAANMFRTLTLTALVSAVVSA). N-linked (GlcNAc...) asparagine glycans are attached at residues Asn81 and Asn156.

Belongs to the Diels-Alderase family.

The protein operates within mycotoxin biosynthesis. In terms of biological role, hexane cyclase; part of the gene cluster that mediates the biosynthesis of xenoacremones such as xenoacremone A, a compound that shows inhibitory activity toward the PI3K/AKT signaling pathway and which has the ability to induce apoptosis of A549 lung cancer cells. Within the pathway, cooperation of the hybrid PKS-NRPS xenE and the trans-acting enoyl reductase xenG is responsible for the formation of the reduced tyrosine-nonaketide derivative. The alpha/beta hydrolase xenA then accelerates intramolecular nucleophilic attack to give a pyrrolidone derivative. Subsequently, three enzymes, xenF, xenD, and xenC, coordinately participate in the conversion to xenoacremone B. XenF catalyzes sigmatropic rearrangement to form an A-ring, which leads to an unusual intermediate with a hexane ring, which is required for the formation of the tricarbocyclic product. Epoxidation catalyzed by xenD and the formation of the paracyclophane ether catalyzed by xenC initiate a spontaneous intramolecular Diels-Alder (IMDA) reaction to yield xenoacremone B. Spontaneous hydration of xenoacremone B leads to the formation of xenoacremone A, which undergoes subsequent methylation to afford xenoacremone C. The polypeptide is Hexane cyclase xenF (Xenoacremonium sinensis (Endophyte fungus)).